Here is a 245-residue protein sequence, read N- to C-terminus: GTP cyclohydrolase 1 type 2 homolog (245 aa).

5 residues coordinate a divalent metal cation: H63, H64, D100, H213, and E217.

It belongs to the GTP cyclohydrolase I type 2/NIF3 family. Homohexamer.

The chain is GTP cyclohydrolase 1 type 2 homolog from Archaeoglobus fulgidus (strain ATCC 49558 / DSM 4304 / JCM 9628 / NBRC 100126 / VC-16).